Reading from the N-terminus, the 95-residue chain is Protein J1 homolog (95 aa).

This sequence belongs to the chordopoxvirinae J1 family. As to quaternary structure, homodimer. Part of a complex composed of A30, G7, F10 kinase, A15, D2, D3, and J1. Interacts with A45.

The protein resides in the virion. It localises to the host cytoplasm. Functionally, late protein which is a part of a large complex required for early virion morphogenesis. This complex participates in the formation of virosomes and the incorporation of virosomal contents into nascent immature virions. J1 protein is required for DNA packaging during immature virions (IV) formation. This chain is Protein J1 homolog, found in Sus scrofa (Pig).